The chain runs to 812 residues: ATP-dependent zinc metalloprotease FtsH (812 aa).

Residues 1–21 are Cytoplasmic-facing; the sequence is MPPSPPRPPKFPGSGRPESPN. A helical transmembrane segment spans residues 22–42; sequence WGVWVMVLLIVGVLAFGFFTP. Topologically, residues 43-241 are extracellular; it reads ESFGLGPRKE…TKFKRESGSW (199 aa). Residues 242–262 form a helical membrane-spanning segment; the sequence is GGILLNLLPIVLILVILFFMF. At 263 to 812 the chain is on the cytoplasmic side; it reads RAQSGGARGA…EFGKDGGEKK (550 aa). Residue 333 to 340 participates in ATP binding; the sequence is GAPGTGKT. His-555 is a Zn(2+) binding site. The active site involves Glu-556. The Zn(2+) site is built by His-559 and Asp-631. Positions 739 to 812 are disordered; the sequence is KNPPARVTPP…EFGKDGGEKK (74 aa). 2 stretches are compositionally biased toward basic and acidic residues: residues 757–785 and 803–812; these read QPGK…RKME and EFGKDGGEKK.

The protein in the central section; belongs to the AAA ATPase family. In the C-terminal section; belongs to the peptidase M41 family. As to quaternary structure, homohexamer. The cofactor is Zn(2+).

The protein localises to the cell membrane. In terms of biological role, acts as a processive, ATP-dependent zinc metallopeptidase for both cytoplasmic and membrane proteins. Plays a role in the quality control of integral membrane proteins. This chain is ATP-dependent zinc metalloprotease FtsH, found in Akkermansia muciniphila (strain ATCC BAA-835 / DSM 22959 / JCM 33894 / BCRC 81048 / CCUG 64013 / CIP 107961 / Muc).